Consider the following 96-residue polypeptide: Large ribosomal subunit protein uL23 (96 aa).

This sequence belongs to the universal ribosomal protein uL23 family. In terms of assembly, part of the 50S ribosomal subunit. Contacts protein L29, and trigger factor when it is bound to the ribosome.

Its function is as follows. One of the early assembly proteins it binds 23S rRNA. One of the proteins that surrounds the polypeptide exit tunnel on the outside of the ribosome. Forms the main docking site for trigger factor binding to the ribosome. This is Large ribosomal subunit protein uL23 from Ruthia magnifica subsp. Calyptogena magnifica.